The following is a 360-amino-acid chain: DNA ADP-ribosyl glycohydrolase (360 aa).

Residues 1–155 form the Macro domain; it reads MLRFVRGNLL…VYEPVENPKA (155 aa). Residues 8 to 9, 20 to 22, 31 to 34, and Thr79 each bind ADP-D-ribose; these read NL, TVN, and VALQ. Lys80 serves as the catalytic Nucleophile. 117–121 serves as a coordination point for ADP-D-ribose; it reads GAGNG. The segment at 167–338 is interaction with DarT; that stretch reads LTPARAALLK…VALDALLKRG (172 aa).

This sequence belongs to the DarG ADP-ribosyl glycohydrolase family. In terms of assembly, interacts (via C-terminus) with cognate toxin DarT; this heterodimeric complex neutralizes the toxic effect of DarT by preventing ssDNA binding to DarT and consequently inactivating the toxin by direct protein-protein interactions.

The catalysed reaction is an N-(ADP-alpha-D-ribosyl)-thymidine in DNA + H2O = a thymidine in DNA + ADP-D-ribose. Antitoxin component of the hybrid type II/IV toxin-antitoxin (TA) system DarTG, which plays a crucial role in controlling bacterial growth and bacteriophage infection. De-ADP-ribosylates DNA modified on thymidine by its cognate toxin DarT, which neutralizes the activity of cognate toxin DarT. Upon expression in E.coli neutralizes the effect of cognate toxin DarT. Upon expression in M.tuberculosis neutralizes the toxic effects of endogenous DarT. This Thermus aquaticus (strain ATCC BAA-2747 / Y51MC23) protein is DNA ADP-ribosyl glycohydrolase.